Here is a 699-residue protein sequence, read N- to C-terminus: Triacylglycerol hydrolase DDHD2 (699 aa).

Polar residues predominate over residues 1 to 11 (MSSGESHQEQL). A disordered region spans residues 1-25 (MSSGESHQEQLSQSDPSPSPNSCSS). Residues 12-25 (SQSDPSPSPNSCSS) show a composition bias toward low complexity. The WWE domain maps to 30 to 112 (DMDASSSYEP…WDELPSEVRR (83 aa)). Catalysis depends on Ser351, which acts as the Nucleophile. One can recognise an SAM domain in the interval 383-445 (DRGDASTLEE…KILNHFSARK (63 aa)). Phosphoserine is present on Ser447. In terms of domain architecture, DDHD spans 484 to 688 (LNYKPEIFFA…VLLVLKEIYQ (205 aa)). Residues 599–635 (QASETAEETEAEPESSSEKSNEANTEEPPVEVKEEAP) are disordered. Positions 603-613 (TAEETEAEPES) are enriched in acidic residues.

The protein belongs to the PA-PLA1 family. As to quaternary structure, forms homooligomers and, to a much smaller extent, heterooligomers with DDHD1.

It localises to the cytoplasm. The protein localises to the cytosol. It is found in the endoplasmic reticulum-Golgi intermediate compartment. Its subcellular location is the golgi apparatus. The protein resides in the cis-Golgi network. It carries out the reaction a triacylglycerol + H2O = a diacylglycerol + a fatty acid + H(+). The enzyme catalyses a diacylglycerol + H2O = a monoacylglycerol + a fatty acid + H(+). It catalyses the reaction a 1,3-diacylglycerol + H2O = a 1-acylglycerol + a fatty acid + H(+). The catalysed reaction is a 1-acylglycerol + H2O = glycerol + a fatty acid + H(+). It carries out the reaction 1,2,3-tri-(9Z-octadecenoyl)-glycerol + H2O = di-(9Z)-octadecenoylglycerol + (9Z)-octadecenoate + H(+). The enzyme catalyses di-(9Z)-octadecenoylglycerol + H2O = (9Z-octadecenoyl)-glycerol + (9Z)-octadecenoate + H(+). It catalyses the reaction 1,3-di-(9Z-octadecenoyl)-glycerol + H2O = 1-(9Z-octadecenoyl)-glycerol + (9Z)-octadecenoate + H(+). The catalysed reaction is trihexadecanoylglycerol + H2O = dihexadecanoylglycerol + hexadecanoate + H(+). It carries out the reaction 1,2-di-(9Z-octadecenoyl)-sn-glycero-3-phosphocholine + H2O = (9Z-octadecenoyl)-sn-glycero-3-phosphocholine + (9Z)-octadecenoate + H(+). The enzyme catalyses 1-(9Z-octadecenoyl)-glycerol + H2O = glycerol + (9Z)-octadecenoate + H(+). It catalyses the reaction 1,2-di-(9Z-octadecenoyl)-sn-glycero-3-phosphate + H2O = 2-(9Z-octadecenoyl)-sn-glycero-3-phosphate + (9Z)-octadecenoate + H(+). The catalysed reaction is 1-hexadecanoyl-2-(9Z-octadecenoyl)-sn-glycero-3-phosphate + H2O = 2-(9Z-octadecenoyl)-sn-glycero-3-phosphate + hexadecanoate + H(+). It carries out the reaction 1-hexadecanoyl-2-(9Z-octadecenoyl)-sn-glycero-3-phosphoethanolamine + H2O = 2-(9Z-octadecenoyl)-sn-glycero-3-phosphoethanolamine + hexadecanoate + H(+). The enzyme catalyses 1-hexadecanoyl-2-(9Z-octadecenoyl)-sn-glycero-3-phospho-L-serine + H2O = 2-(9Z-octadecenoyl)-sn-glycero-3-phospho-L-serine + hexadecanoate + H(+). It catalyses the reaction 1-hexadecanoyl-2-(9Z-octadecenoyl)-sn-glycero-3-phosphocholine + H2O = 2-(9Z-octadecenoyl)-sn-glycero-3-phosphocholine + hexadecanoate + H(+). Functionally, diacylglycerol (DAG) and triacylglycerol (TAG) lipase that is required for proper lipid homeostasis in the central nervous system. It cooperates with PNPLA2/ATGL in neuronal TAG catabolism and hydrolyzes sn-1,3-DAG downstream of PNPLA2/ATGL. In vitro, also acts as a phospholipase that hydrolyzes preferentially phosphatidic acids, including 1,2-dioleoyl-sn-phosphatidic acid, phosphatidylcholine and phosphatidylethanolamine. Specifically binds to phosphatidylinositol 3-phosphate (PI(3)P), phosphatidylinositol 4-phosphate (PI(4)P), phosphatidylinositol 5-phosphate (PI(5)P) and possibly phosphatidylinositol 4,5-bisphosphate (PI(4,5)P2). May be involved in the maintenance of the endoplasmic reticulum and/or Golgi structures. May regulate the transport between Golgi apparatus and plasma membrane. In Mus musculus (Mouse), this protein is Triacylglycerol hydrolase DDHD2.